Consider the following 960-residue polypeptide: Angiomotin-like protein 1 (960 aa).

The interval 196–248 (SQFFRGQQPPPPPPQQQPGAVGHSYYMAGGASQKARTEGRPTVSRANSGQAHK) is disordered. 3 positions are modified to phosphoserine: S243, S271, and S297. Positions 261 to 281 (RSLSERIMQLSLERNGAKQHL) form a coiled coil. 3 disordered regions span residues 277 to 317 (AKQH…EYPF), 381 to 407 (LPFP…LHSV), and 413 to 432 (PPMA…SQQL). Low complexity predominate over residues 388-401 (QQHSPVSSQNSSVS). Coiled-coil stretches lie at residues 440–641 (VERA…WLER) and 667–697 (ALME…VEES). Position 722 is a phosphoserine (S722). A coiled-coil region spans residues 731-761 (SLEAHIWQEEEEVVQATRRCQDMEYTIKNLH). The segment at 775 to 826 (QQRSRKDAGKTDSSSLRPARSVPSIAAATGTHSRQTSLTSSQLAEERKEEKT) is disordered. A phosphoserine mark is found at S795, S807, and S830. The segment covering 804-817 (GTHSRQTSLTSSQL) has biased composition (polar residues). Positions 842–952 (NDHASTPLLP…NLLHKPEFPD (111 aa)) are disordered. The span at 845 to 870 (ASTPLLPTPSAATLSPPTPGTSASSA) shows a compositional bias: low complexity. Polar residues predominate over residues 898–911 (PTRSRLSGTPSNSP). S904 is modified (phosphoserine). T906 carries the phosphothreonine modification. A Phosphoserine modification is found at S910. The PDZ-binding motif lies at 957–960 (EVLI).

Belongs to the angiomotin family. In terms of processing, polyubiquitinated by NEDD4, leading to proteasomal degradation.

The protein localises to the cell junction. It localises to the tight junction. In terms of biological role, inhibits the Wnt/beta-catenin signaling pathway, probably by recruiting CTNNB1 to recycling endosomes and hence preventing its translocation to the nucleus. In Bos taurus (Bovine), this protein is Angiomotin-like protein 1 (AMOTL1).